Reading from the N-terminus, the 115-residue chain is Large ribosomal subunit protein bL19 (115 aa).

The protein belongs to the bacterial ribosomal protein bL19 family.

In terms of biological role, this protein is located at the 30S-50S ribosomal subunit interface and may play a role in the structure and function of the aminoacyl-tRNA binding site. The polypeptide is Large ribosomal subunit protein bL19 (Hydrogenovibrio crunogenus (strain DSM 25203 / XCL-2) (Thiomicrospira crunogena)).